We begin with the raw amino-acid sequence, 338 residues long: Ketol-acid reductoisomerase (NADP(+)) (338 aa).

In terms of domain architecture, KARI N-terminal Rossmann spans 1-181; sequence MKVYYDKDAD…GGTRGGVIET (181 aa). NADP(+) is bound by residues 24-27, Arg47, and Ser52; that span reads YGSQ. Residue His107 is part of the active site. An NADP(+)-binding site is contributed by Gly133. The KARI C-terminal knotted domain occupies 182–327; that stretch reads TFKEETETDL…SRLRDMMPWI (146 aa). Positions 190, 194, 226, and 230 each coordinate Mg(2+). Ser251 is a substrate binding site.

It belongs to the ketol-acid reductoisomerase family. Mg(2+) serves as cofactor.

The catalysed reaction is (2R)-2,3-dihydroxy-3-methylbutanoate + NADP(+) = (2S)-2-acetolactate + NADPH + H(+). It carries out the reaction (2R,3R)-2,3-dihydroxy-3-methylpentanoate + NADP(+) = (S)-2-ethyl-2-hydroxy-3-oxobutanoate + NADPH + H(+). It participates in amino-acid biosynthesis; L-isoleucine biosynthesis; L-isoleucine from 2-oxobutanoate: step 2/4. The protein operates within amino-acid biosynthesis; L-valine biosynthesis; L-valine from pyruvate: step 2/4. Its function is as follows. Involved in the biosynthesis of branched-chain amino acids (BCAA). Catalyzes an alkyl-migration followed by a ketol-acid reduction of (S)-2-acetolactate (S2AL) to yield (R)-2,3-dihydroxy-isovalerate. In the isomerase reaction, S2AL is rearranged via a Mg-dependent methyl migration to produce 3-hydroxy-3-methyl-2-ketobutyrate (HMKB). In the reductase reaction, this 2-ketoacid undergoes a metal-dependent reduction by NADPH to yield (R)-2,3-dihydroxy-isovalerate. This chain is Ketol-acid reductoisomerase (NADP(+)), found in Nitrosomonas eutropha (strain DSM 101675 / C91 / Nm57).